A 307-amino-acid polypeptide reads, in one-letter code: Heme A synthase (307 aa).

Residues 1–8 (MQHNRYLK) are Cytoplasmic-facing. A helical transmembrane segment spans residues 9–29 (WFAVAATVGMLLILLGGALVT). Residues 30 to 56 (KTDSGLGCGRNWPDCNGSLIPKEITPE) lie on the Extracellular side of the membrane. An intrachain disulfide couples C37 to C44. A helical transmembrane segment spans residues 57–77 (VLIEFSHRLVTGVVSISILVL). E60 is a catalytic residue. H63 serves as a coordination point for heme o. The Cytoplasmic portion of the chain corresponds to 78-92 (TVWTWRKLGHIREVK). The chain crosses the membrane as a helical span at residues 93–113 (LLGFLAMFFLIAQALIGAAQV). Topologically, residues 114-123 (LWGQGDFILA) are extracellular. A helical transmembrane segment spans residues 124-144 (LHFGISLISFAAVLLLSMIVF). H125 contributes to the heme o binding site. Topologically, residues 145-161 (EVDRKFDADNVFIGKKL) are cytoplasmic. The helical transmembrane segment at 162-182 (RWHTIAVTIYSYLVVYTGALV) threads the bilayer. Residues 183–218 (RHTDSSLICPDWPFCYNETPLASPNNMYEWVQMGHR) lie on the Extracellular side of the membrane. C191 and C197 form a disulfide bridge. Position 217 (H217) interacts with heme b. The helical transmembrane segment at 219-239 (LAVLIIFIWIAYITWHAVKEY) threads the bilayer. Over 240 to 247 (KNQRVVYY) the chain is Cytoplasmic. A helical membrane pass occupies residues 248–268 (GWIIAFTIVFLQVIAGMLVVL). Over 269–276 (TKLNLTVA) the chain is Extracellular. A helical transmembrane segment spans residues 277-297 (LMHSLLISLLFGLLCYMIMLV). H279 provides a ligand contact to heme b. Topologically, residues 298 to 307 (ARSNYNEKMK) are cytoplasmic.

This sequence belongs to the COX15/CtaA family. Type 1 subfamily. As to quaternary structure, interacts with CtaB. Heme b serves as cofactor.

The protein resides in the cell membrane. It catalyses the reaction Fe(II)-heme o + 2 A + H2O = Fe(II)-heme a + 2 AH2. Its pathway is porphyrin-containing compound metabolism; heme A biosynthesis; heme A from heme O: step 1/1. Catalyzes the conversion of heme O to heme A by two successive hydroxylations of the methyl group at C8. The first hydroxylation forms heme I, the second hydroxylation results in an unstable dihydroxymethyl group, which spontaneously dehydrates, resulting in the formyl group of heme A. This is Heme A synthase from Lysinibacillus sphaericus (strain C3-41).